A 123-amino-acid chain; its full sequence is Large ribosomal subunit protein uL14 (123 aa).

The protein belongs to the universal ribosomal protein uL14 family. Part of the 50S ribosomal subunit. Forms a cluster with proteins L3 and L19. In the 70S ribosome, L14 and L19 interact and together make contacts with the 16S rRNA in bridges B5 and B8.

Binds to 23S rRNA. Forms part of two intersubunit bridges in the 70S ribosome. The protein is Large ribosomal subunit protein uL14 of Blochmanniella pennsylvanica (strain BPEN).